A 286-amino-acid chain; its full sequence is Alpha-ketoglutarate-dependent dioxygenase alkB homolog 3 (286 aa).

The interval 1-38 is disordered; that stretch reads MEDKRRRARVQGAWAGPAKSQATAQPAPTAENNLQQRP. Positions 20–36 are enriched in polar residues; sequence SQATAQPAPTAENNLQQ. Substrate contacts are provided by residues Trp115 and 141-143; that span reads YTY. The 107-residue stretch at 172 to 278 folds into the Fe2OG dioxygenase domain; sequence SFNSLLCNLY…RINLTFRTVY (107 aa). Leu177 bears the (4R)-5-hydroxyleucine; alternate mark. A (4R)-5-oxoleucine; alternate modification is found at Leu177. 179–181 serves as a coordination point for 2-oxoglutarate; it reads NLY. Fe cation-binding residues include His191 and Asp193. Asp194 lines the substrate pocket. His257 provides a ligand contact to Fe cation. 2-oxoglutarate is bound by residues 269–275 and Arg275; that span reads RINLTFR.

This sequence belongs to the alkB family. In terms of assembly, interacts with the ASCC complex composed of ASCC1, ASCC2 and ASCC3. Interacts directly with ASCC3, and is thereby recruited to the ASCC complex. Interacts with OTUD4; the interaction is direct. Interacts with USP7 and USP9X. Fe(2+) is required as a cofactor. Ubiquitinated; undergoes 'Lys-48'-linked polyubiquitination. OTUD4 promotes USP7 and USP9X-dependent deubiquitination of 'Lys-48'-polyubiquitinated ALKBH3 promoting the repair of alkylated DNA lesions.

It is found in the nucleus. Its subcellular location is the cytoplasm. It catalyses the reaction an N(1)-methyladenosine in mRNA + 2-oxoglutarate + O2 = an adenosine in mRNA + formaldehyde + succinate + CO2. It carries out the reaction a methylated nucleobase within DNA + 2-oxoglutarate + O2 = a nucleobase within DNA + formaldehyde + succinate + CO2. The enzyme catalyses an N(1)-methyl-2'-deoxyadenosine in single-stranded DNA + 2-oxoglutarate + O2 = a 2'-deoxyadenosine in single-stranded DNA + formaldehyde + succinate + CO2 + H(+). The catalysed reaction is an N(3)-methyl-2'-deoxycytidine in single-stranded DNA + 2-oxoglutarate + O2 = a 2'-deoxycytidine in single-stranded DNA + formaldehyde + succinate + CO2 + H(+). It catalyses the reaction a 3,N(4)-etheno-2'-deoxycytidine in single-stranded DNA + 2-oxoglutarate + O2 + H2O = a 2'-deoxycytidine in single-stranded DNA + glyoxal + succinate + CO2. Activated by ascorbate. Functionally, dioxygenase that mediates demethylation of DNA and RNA containing 1-methyladenosine (m1A). Repairs alkylated DNA containing 1-methyladenosine (m1A) and 3-methylcytosine (m3C) by oxidative demethylation. Has a strong preference for single-stranded DNA. Able to process alkylated m3C within double-stranded regions via its interaction with ASCC3, which promotes DNA unwinding to generate single-stranded substrate needed for ALKBH3. Can repair exocyclic 3,N4-ethenocytosine adducs in single-stranded DNA. Also acts on RNA. Demethylates N(1)-methyladenosine (m1A) RNA, an epigenetic internal modification of messenger RNAs (mRNAs) highly enriched within 5'-untranslated regions (UTRs) and in the vicinity of start codons. Requires molecular oxygen, alpha-ketoglutarate and iron. The sequence is that of Alpha-ketoglutarate-dependent dioxygenase alkB homolog 3 from Bos taurus (Bovine).